The primary structure comprises 194 residues: Isopentenyl-diphosphate Delta-isomerase (194 aa).

Mn(2+) contacts are provided by His-27 and His-34. In terms of domain architecture, Nudix hydrolase spans 32 to 166 (ALHLAFSCHV…PWAFSPWLTL (135 aa)). The active site involves Cys-69. Residue His-71 coordinates Mn(2+). Glu-89 is a binding site for Mg(2+). 2 residues coordinate Mn(2+): Glu-116 and Glu-118. Glu-118 is an active-site residue.

Belongs to the IPP isomerase type 1 family. It depends on Mg(2+) as a cofactor. The cofactor is Mn(2+).

It localises to the cytoplasm. The enzyme catalyses isopentenyl diphosphate = dimethylallyl diphosphate. It participates in isoprenoid biosynthesis; dimethylallyl diphosphate biosynthesis; dimethylallyl diphosphate from isopentenyl diphosphate: step 1/1. In terms of biological role, catalyzes the 1,3-allylic rearrangement of the homoallylic substrate isopentenyl (IPP) to its highly electrophilic allylic isomer, dimethylallyl diphosphate (DMAPP). This Clavibacter michiganensis subsp. michiganensis (strain NCPPB 382) protein is Isopentenyl-diphosphate Delta-isomerase.